Here is a 96-residue protein sequence, read N- to C-terminus: Essential MCU regulator, mitochondrial (96 aa).

A mitochondrion-targeting transit peptide spans 1 to 34 (MIVSRLTFPLQAAKLVARKAAGNPSNSIIQRRHM). A helical transmembrane segment spans residues 52-72 (PFGLFAIFCAVIPGLFIGATI).

Belongs to the SMDT1/EMRE family.

Its subcellular location is the mitochondrion inner membrane. Its function is as follows. Essential regulatory subunit of the mitochondrial calcium uniporter (mcu) channel, a protein that mediates calcium uptake into mitochondria. This Drosophila pseudoobscura pseudoobscura (Fruit fly) protein is Essential MCU regulator, mitochondrial.